Consider the following 251-residue polypeptide: Electron transfer flavoprotein subunit beta, mitochondrial (251 aa).

It belongs to the ETF beta-subunit/FixA family. In terms of assembly, heterodimer of an alpha and a beta subunit. The cofactor is FAD. AMP is required as a cofactor.

The protein localises to the mitochondrion matrix. The electron transfer flavoprotein serves as a specific electron acceptor for several dehydrogenases, including five acyl-CoA dehydrogenases, glutaryl-CoA and sarcosine dehydrogenase. It transfers the electrons to the main mitochondrial respiratory chain via ETF-ubiquinone oxidoreductase (ETF dehydrogenase). Involved in leucine catabolism and in phytol degradation. This Arabidopsis thaliana (Mouse-ear cress) protein is Electron transfer flavoprotein subunit beta, mitochondrial (ETFB).